The following is a 428-amino-acid chain: C4-dicarboxylate transport protein (428 aa).

Helical transmembrane passes span 7 to 27 (SLYF…IVAP), 40 to 60 (FIKL…VLGI), 75 to 95 (LALL…LLIV), 143 to 163 (AFAR…GIAL), 196 to 216 (PIGA…GSLF), 221 to 241 (LMAT…GAIA), 306 to 326 (IYLT…MTLG), 329 to 349 (FTLL…TGSG), and 351 to 371 (IVLA…LALI).

This sequence belongs to the dicarboxylate/amino acid:cation symporter (DAACS) (TC 2.A.23) family.

Its subcellular location is the cell inner membrane. Functionally, responsible for the transport of dicarboxylates such as succinate, fumarate, and malate from the periplasm across the membrane. In Solibacter usitatus (strain Ellin6076), this protein is C4-dicarboxylate transport protein.